Here is a 167-residue protein sequence, read N- to C-terminus: Gametocyte-specific factor 1 homolog (167 aa).

2 consecutive CHHC U11-48K-type zinc fingers follow at residues 1–28 (MVYC…RVIY) and 34–61 (LMVC…EDRN). Residues cysteine 4, histidine 10, histidine 20, cysteine 24, cysteine 37, histidine 43, histidine 53, and cysteine 57 each contribute to the Zn(2+) site. Residues 128 to 161 (EKRRHFGEDYEEEKKPRKAKARADLRPTPYEHRR) show a composition bias toward basic and acidic residues. Residues 128-167 (EKRRHFGEDYEEEKKPRKAKARADLRPTPYEHRRPYSRRQ) form a disordered region.

This sequence belongs to the UPF0224 (FAM112) family. Interacts with piwi.

It is found in the nucleus. In terms of biological role, acts via the piwi-interacting RNA (piRNA) pathway which mediates the repression of transposable elements during meiosis by forming complexes composed of piRNAs and piwi proteins and governs the methylation and subsequent repression of transposons. Required for repression of transposons and neighboring genes in ovarian somatic and germline cells. This is Gametocyte-specific factor 1 homolog from Drosophila melanogaster (Fruit fly).